Here is a 324-residue protein sequence, read N- to C-terminus: tRNA N6-adenosine threonylcarbamoyltransferase (324 aa).

3 residues coordinate Fe cation: H107, H111, and Y127. Residues 127–131 (YVSGG), D159, G172, E176, and N257 each bind substrate. Residue D285 coordinates Fe cation.

Belongs to the KAE1 / TsaD family. As to quaternary structure, monomer. Component of the KEOPS complex that consists of Kae1, Bud32, Cgi121 and Pcc1; the whole complex dimerizes. Fe(2+) is required as a cofactor.

It is found in the cytoplasm. It carries out the reaction L-threonylcarbamoyladenylate + adenosine(37) in tRNA = N(6)-L-threonylcarbamoyladenosine(37) in tRNA + AMP + H(+). Functionally, required for the formation of a threonylcarbamoyl group on adenosine at position 37 (t(6)A37) in tRNAs that read codons beginning with adenine. Is a component of the KEOPS complex that is probably involved in the transfer of the threonylcarbamoyl moiety of threonylcarbamoyl-AMP (TC-AMP) to the N6 group of A37. Kae1 likely plays a direct catalytic role in this reaction, but requires other protein(s) of the complex to fulfill this activity. The sequence is that of tRNA N6-adenosine threonylcarbamoyltransferase from Pyrococcus furiosus (strain ATCC 43587 / DSM 3638 / JCM 8422 / Vc1).